We begin with the raw amino-acid sequence, 440 residues long: Xylose isomerase (440 aa).

Residues aspartate 307 and aspartate 309 each coordinate Mg(2+).

It belongs to the xylose isomerase family. Homotetramer. Mg(2+) serves as cofactor.

It is found in the cytoplasm. It carries out the reaction alpha-D-xylose = alpha-D-xylulofuranose. This chain is Xylose isomerase, found in Escherichia coli (strain K12 / MC4100 / BW2952).